Here is a 600-residue protein sequence, read N- to C-terminus: Probable translation initiation factor IF-2 (600 aa).

Residues leucine 13–methionine 228 enclose the tr-type G domain. The segment at glycine 22–threonine 29 is G1. Residue glycine 22 to threonine 29 participates in GTP binding. The segment at alanine 47–histidine 51 is G2. The tract at residues aspartate 84 to glycine 87 is G3. GTP is bound by residues aspartate 84–histidine 88 and asparagine 138–aspartate 141. The interval asparagine 138 to aspartate 141 is G4. The interval isoleucine 140–serine 162 is disordered. Residues serine 206–glutamate 208 form a G5 region.

Belongs to the TRAFAC class translation factor GTPase superfamily. Classic translation factor GTPase family. IF-2 subfamily.

Its function is as follows. Function in general translation initiation by promoting the binding of the formylmethionine-tRNA to ribosomes. Seems to function along with eIF-2. This chain is Probable translation initiation factor IF-2, found in Halobacterium salinarum (strain ATCC 700922 / JCM 11081 / NRC-1) (Halobacterium halobium).